We begin with the raw amino-acid sequence, 722 residues long: Transcription factor kayak, isoforms D/sro (722 aa).

Residues 173–188 (QHQTQQQHQSQQQQQH) show a composition bias toward low complexity. Disordered regions lie at residues 173-193 (QHQT…RQDY), 283-317 (LGQG…HTDS), and 350-407 (GSAS…KRRV). Residues 283–300 (LGQGSESEDSNASYNDTQ) are compositionally biased toward polar residues. 2 stretches are compositionally biased toward low complexity: residues 308–317 (TDTSSAHTDS) and 350–364 (GSAS…TSNT). The 64-residue stretch at 385 to 448 (EQKRAVRRER…NQLEYLLATH (64 aa)) folds into the bZIP domain. The interval 387-406 (KRAVRRERNKQAAARCRKRR) is basic motif. The segment at 413-420 (LTEEVEQL) is leucine-zipper. Low complexity predominate over residues 477–498 (AGSSGSGASSHHNHNSNDSSNG). Disordered regions lie at residues 477-519 (AGSS…PLDL) and 683-722 (DGGT…LVSL). A compositionally biased stretch (polar residues) spans 506–516 (TLNSTGRSNSP). At Ser-515 the chain carries Phosphoserine.

This sequence belongs to the bZIP family. Fos subfamily. As to quaternary structure, homodimer. Heterodimer with Jra. The kay-Jra heterodimer binds more stably to the AP-1 site than either of the two proteins alone.

It is found in the nucleus. Developmentally regulated transcription factor AP-1 binds and recognizes the enhancer DNA sequence: 5'-TGA[CG]TCA-3'. May play a role in the function or determination of a particular subset of cells in the developing embryo. It is able to carry out its function either independently of or in conjunction with Jra. The chain is Transcription factor kayak, isoforms D/sro from Drosophila melanogaster (Fruit fly).